A 93-amino-acid chain; its full sequence is Neurophysin 1 (93 aa).

Cystine bridges form between Cys-10–Cys-54, Cys-13–Cys-27, Cys-21–Cys-44, Cys-28–Cys-34, Cys-61–Cys-74, Cys-68–Cys-86, and Cys-75–Cys-80.

It belongs to the vasopressin/oxytocin family.

The protein localises to the secreted. Its function is as follows. Neurophysin 1 specifically binds oxytocin. This chain is Neurophysin 1, found in Anser anser anser (Western greylag goose).